Reading from the N-terminus, the 222-residue chain is Pyridoxal phosphate homeostasis protein (222 aa).

At Lys-35 the chain carries N6-(pyridoxal phosphate)lysine.

Belongs to the pyridoxal phosphate-binding protein YggS/PROSC family.

In terms of biological role, pyridoxal 5'-phosphate (PLP)-binding protein, which is involved in PLP homeostasis. In Helicobacter pylori (strain ATCC 700392 / 26695) (Campylobacter pylori), this protein is Pyridoxal phosphate homeostasis protein.